Reading from the N-terminus, the 1412-residue chain is DNA-directed RNA polymerase subunit beta' (1412 aa).

4 residues coordinate Zn(2+): cysteine 71, cysteine 73, cysteine 86, and cysteine 89. Aspartate 461, aspartate 463, and aspartate 465 together coordinate Mg(2+). Residues cysteine 815, cysteine 889, cysteine 896, and cysteine 899 each contribute to the Zn(2+) site.

Belongs to the RNA polymerase beta' chain family. As to quaternary structure, the RNAP catalytic core consists of 2 alpha, 1 beta, 1 beta' and 1 omega subunit. When a sigma factor is associated with the core the holoenzyme is formed, which can initiate transcription. Mg(2+) serves as cofactor. Requires Zn(2+) as cofactor.

The enzyme catalyses RNA(n) + a ribonucleoside 5'-triphosphate = RNA(n+1) + diphosphate. Its function is as follows. DNA-dependent RNA polymerase catalyzes the transcription of DNA into RNA using the four ribonucleoside triphosphates as substrates. This Actinobacillus pleuropneumoniae serotype 5b (strain L20) protein is DNA-directed RNA polymerase subunit beta'.